Reading from the N-terminus, the 95-residue chain is Small ribosomal subunit protein uS19 (95 aa).

Belongs to the universal ribosomal protein uS19 family.

Its function is as follows. Protein S19 forms a complex with S13 that binds strongly to the 16S ribosomal RNA. The polypeptide is Small ribosomal subunit protein uS19 (Myxococcus xanthus (strain DK1622)).